The primary structure comprises 1324 residues: Ubiquitin carboxyl-terminal hydrolase 42 (1324 aa).

2 disordered regions span residues 1 to 38 (MTIV…SASW) and 63 to 87 (YSSS…DGIA). Residues 10–25 (SSDPSAYQNQPGSSEA) show a composition bias toward polar residues. The span at 63–80 (YSSSSVPDKSKPSPQKDQ) shows a compositional bias: low complexity. Ser75 carries the post-translational modification Phosphoserine. In terms of domain architecture, USP spans 111-412 (AGLQNLGNTC…QAYVLFYIRS (302 aa)). Cys120 (nucleophile) is an active-site residue. The active-site Proton acceptor is the His371. Disordered stretches follow at residues 452-494 (IGPQ…NRAS), 536-707 (QSQP…MPAP), 722-1026 (LSNK…RHRS), 1085-1131 (RAGL…HPDR), 1149-1254 (DRFH…VKDS), and 1275-1294 (GGFP…FREK). The segment covering 477 to 489 (PSSSMSSPNGNSS) has biased composition (low complexity). At Ser483 the chain carries Phosphoserine. The segment covering 536-564 (QSQPNLHSNSLENPTKPVPSSTITNSAVQ) has biased composition (polar residues). Residues 565-576 (STSNASTMSVSS) are compositionally biased toward low complexity. Polar residues predominate over residues 586–603 (ESCSQPVMNGKSKLNSSV). Ser754 and Ser856 each carry phosphoserine. 5 stretches are compositionally biased toward basic and acidic residues: residues 938–974 (AKEK…SKTE), 984–1013 (CPRE…ERRS), 1101–1113 (RGCE…ERHR), 1149–1158 (DRFHEHENGK), and 1165–1191 (DSVE…EEPK). Position 1181 is a phosphoserine (Ser1181). The segment covering 1192 to 1206 (AKKHKKSKKKKKSKD) has biased composition (basic residues). Basic and acidic residues predominate over residues 1207-1218 (KHRDRDSRHQQD). 3 positions are modified to phosphoserine: Ser1219, Ser1222, and Ser1226. Over residues 1231–1245 (HRHKKKKKKKKRHSR) the composition is skewed to basic residues. The residue at position 1247 (Ser1247) is a Phosphoserine.

Belongs to the peptidase C19 family. As to expression, broadly expressed.

The catalysed reaction is Thiol-dependent hydrolysis of ester, thioester, amide, peptide and isopeptide bonds formed by the C-terminal Gly of ubiquitin (a 76-residue protein attached to proteins as an intracellular targeting signal).. Functionally, deubiquitinating enzyme which may play an important role during spermatogenesis. In Homo sapiens (Human), this protein is Ubiquitin carboxyl-terminal hydrolase 42 (USP42).